We begin with the raw amino-acid sequence, 644 residues long: Threonine--tRNA ligase (644 aa).

A TGS domain is found at 1 to 61; sequence MNVTIEGQVF…ADTTTIEPVF (61 aa). A catalytic region spans residues 241 to 532; sequence DHRKLGQQLD…LTEHFAGAFP (292 aa). Positions 333, 384, and 509 each coordinate Zn(2+).

This sequence belongs to the class-II aminoacyl-tRNA synthetase family. Homodimer. It depends on Zn(2+) as a cofactor.

Its subcellular location is the cytoplasm. The enzyme catalyses tRNA(Thr) + L-threonine + ATP = L-threonyl-tRNA(Thr) + AMP + diphosphate + H(+). Catalyzes the attachment of threonine to tRNA(Thr) in a two-step reaction: L-threonine is first activated by ATP to form Thr-AMP and then transferred to the acceptor end of tRNA(Thr). Also edits incorrectly charged L-seryl-tRNA(Thr). This Nitratidesulfovibrio vulgaris (strain DSM 19637 / Miyazaki F) (Desulfovibrio vulgaris) protein is Threonine--tRNA ligase.